The sequence spans 485 residues: MATALPRTLGELQLYRILQKANLLSYFGAFIQQGGDDVQQLCEAGEEEFLEIMALVGMASKPLHVRRLQKALRDWVTNPGLFNQPLTSLPVSSIPIYKLPKGSPTWLGISCNSYERNSSAREPHLKIPKCAATTCVQSLGQGKSEVGSLAVQSVSESRLWQGHHATESEHSLSPADVGSPASPKESSEALDAAAALSVAECVERMASTLPKSDLNEVKELLKNNKKLAKMIGHIFEMSDEDPHKEEEIRKYSAIYGRFDSKRKDGKHLTLHELTVNEAAAQLCVKDNALLTRRDELFALARQVSREVTYKYTYRTTRLKCGERDELSPKRIKVEDGFPDFQEPVQTLFQQARAKSEELAALSSQQTEKGMAKQMELLCAQASYERLQQERRLTAGLYRQSSGEHSPDGLPSDGSDGQGERPLNLRMPNVQNRQPHHFVADGELSRLYSSEAKSHSSENLGILKDYPHSAFTLEKKVIKTEPEDSR.

The interval 4-82 is NCD1; that stretch reads ALPRTLGELQ…RDWVTNPGLF (79 aa). Residues Lys126, Lys129, and Lys143 each participate in a glycyl lysine isopeptide (Lys-Gly) (interchain with G-Cter in SUMO2) cross-link. Residues 160–187 are disordered; it reads WQGHHATESEHSLSPADVGSPASPKESS. Residues Ser171 and Ser182 each carry the phosphoserine modification. Lys211 is covalently cross-linked (Glycyl lysine isopeptide (Lys-Gly) (interchain with G-Cter in SUMO2)). The segment at 220-309 is NCD2; sequence LLKNNKKLAK…ARQVSREVTY (90 aa). The tract at residues 306 to 337 is necessary for nuclear localization; it reads EVTYKYTYRTTRLKCGERDELSPKRIKVEDGF. A Phosphoserine modification is found at Ser327. Lys332 is covalently cross-linked (Glycyl lysine isopeptide (Lys-Gly) (interchain with G-Cter in SUMO1); alternate). Lys332 participates in a covalent cross-link: Glycyl lysine isopeptide (Lys-Gly) (interchain with G-Cter in SUMO2); alternate. Glycyl lysine isopeptide (Lys-Gly) (interchain with G-Cter in SUMO2) cross-links involve residues Lys354, Lys368, and Lys372. The interval 398 to 432 is disordered; the sequence is RQSSGEHSPDGLPSDGSDGQGERPLNLRMPNVQNR. Phosphoserine is present on Ser405. Residues Lys452, Lys463, and Lys475 each participate in a glycyl lysine isopeptide (Lys-Gly) (interchain with G-Cter in SUMO2) cross-link. Residue Lys478 forms a Glycyl lysine isopeptide (Lys-Gly) (interchain with G-Cter in SUMO1); alternate linkage. Residue Lys478 forms a Glycyl lysine isopeptide (Lys-Gly) (interchain with G-Cter in SUMO2); alternate linkage.

This sequence belongs to the NAB family. In terms of assembly, homomultimers may associate with EGR1 bound to DNA.

It localises to the nucleus. In terms of biological role, acts as a transcriptional repressor for zinc finger transcription factors EGR1 and EGR2. The protein is NGFI-A-binding protein 1 (NAB1) of Mesocricetus auratus (Golden hamster).